The following is a 113-amino-acid chain: Large ribosomal subunit protein uL22 (113 aa).

This sequence belongs to the universal ribosomal protein uL22 family. Part of the 50S ribosomal subunit.

This protein binds specifically to 23S rRNA; its binding is stimulated by other ribosomal proteins, e.g. L4, L17, and L20. It is important during the early stages of 50S assembly. It makes multiple contacts with different domains of the 23S rRNA in the assembled 50S subunit and ribosome. Functionally, the globular domain of the protein is located near the polypeptide exit tunnel on the outside of the subunit, while an extended beta-hairpin is found that lines the wall of the exit tunnel in the center of the 70S ribosome. This chain is Large ribosomal subunit protein uL22, found in Syntrophomonas wolfei subsp. wolfei (strain DSM 2245B / Goettingen).